A 70-amino-acid chain; its full sequence is MIIPVRCFTCGKVIGNKWDAYLSLLQIDYTEGDALDALCLKRYCCRRMLLTHVDLIEKLLNYTPLATKSS.

Zn(2+) contacts are provided by cysteine 7, cysteine 10, cysteine 44, and cysteine 45.

This sequence belongs to the archaeal Rpo10/eukaryotic RPB10 RNA polymerase subunit family. As to quaternary structure, component of the RNA polymerase I (Pol I), RNA polymerase II (Pol II) and RNA polymerase III (Pol III) complexes.

Its subcellular location is the nucleus. Its function is as follows. DNA-dependent RNA polymerase catalyzes the transcription of DNA into RNA using the four ribonucleoside triphosphates as substrates. Common component of RNA polymerases I, II and III which synthesize ribosomal RNA precursors, mRNA precursors and many functional non-coding RNAs, and a small RNAs, such as 5S rRNA and tRNAs, respectively. Pol II is the central component of the basal RNA polymerase II transcription machinery. Pols are composed of mobile elements that move relative to each other. In Pol II, RBP10 is part of the core element with the central large cleft. The polypeptide is DNA-directed RNA polymerases I, II, and III subunit rpabc5 (polr2l) (Dictyostelium discoideum (Social amoeba)).